Consider the following 384-residue polypeptide: DNA replication and repair protein RecF (384 aa).

Glycine 43 to threonine 50 provides a ligand contact to ATP.

It belongs to the RecF family.

Its subcellular location is the cytoplasm. The RecF protein is involved in DNA metabolism; it is required for DNA replication and normal SOS inducibility. RecF binds preferentially to single-stranded, linear DNA. It also seems to bind ATP. This is DNA replication and repair protein RecF from Brucella suis biovar 1 (strain 1330).